The sequence spans 82 residues: U7-hexatoxin-Mg1a (82 aa).

The signal sequence occupies residues 1–26 (MRTIVFLIVSILLLSSAVLMLAEGNA). Residues 27-44 (ASHELQEYPIEESLEEQR) constitute a propeptide that is removed on maturation. Intrachain disulfides connect Cys46–Cys62, Cys51–Cys67, Cys61–Cys77, and Cys69–Cys75. At Arg80 the chain carries Arginine amide.

This sequence belongs to the rTX family. As to expression, expressed by the venom gland.

The protein resides in the secreted. Functionally, induces flaccid paralysis when injected into lepidopteran larvae. Intracranial injection into mice causes awkwardness of movement and laboured respiration until death. The sequence is that of U7-hexatoxin-Mg1a from Macrothele gigas (Japanese funnel web spider).